The following is a 454-amino-acid chain: tRNA modification GTPase MnmE (454 aa).

Residues Arg-23, Glu-80, and Lys-120 each coordinate (6S)-5-formyl-5,6,7,8-tetrahydrofolate. The TrmE-type G domain occupies 216-377 (GMKVVIAGRP…LRNHLKQSMG (162 aa)). Asn-226 is a K(+) binding site. Residues 226–231 (NAGKSS), 245–251 (TDIAGTT), 270–273 (DTAG), 335–338 (NKAD), and 358–360 (SAR) contribute to the GTP site. Ser-230 serves as a coordination point for Mg(2+). K(+) contacts are provided by Thr-245, Ile-247, and Thr-250. Thr-251 provides a ligand contact to Mg(2+). Lys-454 provides a ligand contact to (6S)-5-formyl-5,6,7,8-tetrahydrofolate.

Belongs to the TRAFAC class TrmE-Era-EngA-EngB-Septin-like GTPase superfamily. TrmE GTPase family. In terms of assembly, homodimer. Heterotetramer of two MnmE and two MnmG subunits. Requires K(+) as cofactor.

It is found in the cytoplasm. In terms of biological role, exhibits a very high intrinsic GTPase hydrolysis rate. Involved in the addition of a carboxymethylaminomethyl (cmnm) group at the wobble position (U34) of certain tRNAs, forming tRNA-cmnm(5)s(2)U34. In Escherichia coli O127:H6 (strain E2348/69 / EPEC), this protein is tRNA modification GTPase MnmE.